Here is a 184-residue protein sequence, read N- to C-terminus: GMP synthase [glutamine-hydrolyzing] subunit A (184 aa).

Residues 3-184 enclose the Glutamine amidotransferase type-1 domain; it reads RIVVVDNHGQ…ENFRDICAGD (182 aa). The active-site Nucleophile is the Cys73. Residues His161 and Glu163 contribute to the active site.

In terms of assembly, heterodimer composed of a glutamine amidotransferase subunit (A) and a GMP-binding subunit (B).

It catalyses the reaction XMP + L-glutamine + ATP + H2O = GMP + L-glutamate + AMP + diphosphate + 2 H(+). It participates in purine metabolism; GMP biosynthesis; GMP from XMP (L-Gln route): step 1/1. Catalyzes the synthesis of GMP from XMP. The sequence is that of GMP synthase [glutamine-hydrolyzing] subunit A from Natronomonas pharaonis (strain ATCC 35678 / DSM 2160 / CIP 103997 / JCM 8858 / NBRC 14720 / NCIMB 2260 / Gabara) (Halobacterium pharaonis).